The primary structure comprises 103 residues: Large ribosomal subunit protein bL21 (103 aa).

The protein belongs to the bacterial ribosomal protein bL21 family. In terms of assembly, part of the 50S ribosomal subunit. Contacts protein L20.

In terms of biological role, this protein binds to 23S rRNA in the presence of protein L20. The protein is Large ribosomal subunit protein bL21 of Hahella chejuensis (strain KCTC 2396).